Here is a 94-residue protein sequence, read N- to C-terminus: Co-chaperonin GroES (94 aa).

Belongs to the GroES chaperonin family. In terms of assembly, heptamer of 7 subunits arranged in a ring. Interacts with the chaperonin GroEL.

It is found in the cytoplasm. Together with the chaperonin GroEL, plays an essential role in assisting protein folding. The GroEL-GroES system forms a nano-cage that allows encapsulation of the non-native substrate proteins and provides a physical environment optimized to promote and accelerate protein folding. GroES binds to the apical surface of the GroEL ring, thereby capping the opening of the GroEL channel. This chain is Co-chaperonin GroES, found in Ehrlichia chaffeensis (strain ATCC CRL-10679 / Arkansas).